The sequence spans 202 residues: LexA repressor (202 aa).

The H-T-H motif DNA-binding region spans 32–52; it reads RAEVCSAFGFKSPNAAETHLR. Residues Ser-121 and Lys-158 each act as for autocatalytic cleavage activity in the active site.

It belongs to the peptidase S24 family. As to quaternary structure, homodimer.

The enzyme catalyses Hydrolysis of Ala-|-Gly bond in repressor LexA.. Represses a number of genes involved in the response to DNA damage (SOS response), including recA and lexA. In the presence of single-stranded DNA, RecA interacts with LexA causing an autocatalytic cleavage which disrupts the DNA-binding part of LexA, leading to derepression of the SOS regulon and eventually DNA repair. This chain is LexA repressor, found in Azoarcus sp. (strain BH72).